We begin with the raw amino-acid sequence, 536 residues long: GPI alpha-1,2-mannosyltransferase 3 (536 aa).

A glycan (N-linked (GlcNAc...) asparagine) is linked at Asn15. 2 helical membrane-spanning segments follow: residues 40-60 (IFGI…CVLV) and 118-138 (VYLL…YADV). Asn176 carries N-linked (GlcNAc...) asparagine glycosylation. 6 helical membrane passes run 206 to 226 (LVSL…PLIF), 243 to 263 (YFPI…FFYG), 297 to 317 (GLPV…LLST), 322 to 342 (ILLL…HKEF), 344 to 364 (FIYP…AKLQ), and 369 to 389 (AAAG…GLVH). Asn467 carries an N-linked (GlcNAc...) asparagine glycan.

The protein belongs to the glycosyltransferase 22 family. PIGB subfamily.

The protein localises to the endoplasmic reticulum membrane. Its pathway is glycolipid biosynthesis; glycosylphosphatidylinositol-anchor biosynthesis. Its function is as follows. Alpha-1,2-mannosyltransferase that catalyzes the transfer of the third mannose, via an alpha-1,2 bond, from a dolichol-phosphate-mannose (Dol-P-Man) to an alpha-D-Man-(1-&gt;6)-2-PEtn-alpha-D-Man-(1-&gt;4)-alpha-D-GlcN-(1-&gt;6)-(1-radyl,2-acyl-sn-glycero-3-phospho)-2-acyl-inositol intermediate to generate an alpha-D-Man-(1-&gt;2)-alpha-D-Man-(1-&gt;6)-2-PEtn-alpha-D-Man-(1-&gt;4)-alpha-D-GlcN-(1-&gt;6)-(1-radyl,2-acyl-sn-glycero-3-phospho)-2-acyl-inositol (also termed H6) and participates in the nineth step of the glycosylphosphatidylinositol-anchor biosynthesis. May also add the third mannose to an alpha-D-Man-(1-&gt;6)-alpha-D-Man-(1-&gt;4)-alpha-D-GlcN-(1-&gt;6)-(1-radyl,2-acyl-sn-glycero-3-phospho)-2-acyl-inositol (also termed H3) intermediate generating an alpha-D-Man-(1-&gt;2)-alpha-D-Man-(1-&gt;6)-alpha-D-Man-(1-&gt;4)-alpha-D-GlcN-(1-&gt;6)-(1-radyl,2-acyl-sn-glycero-3-phospho)-2-acyl-inositol (also termed H4). In Danio rerio (Zebrafish), this protein is GPI alpha-1,2-mannosyltransferase 3.